The chain runs to 357 residues: Glycerol-3-phosphate dehydrogenase [NAD(P)+] (357 aa).

4 residues coordinate NADPH: Ser30, Phe31, Arg51, and Lys124. Sn-glycerol 3-phosphate-binding residues include Lys124 and Gly152. Ala156 serves as a coordination point for NADPH. Sn-glycerol 3-phosphate contacts are provided by Lys207, Asp260, Ser270, Arg271, and Asn272. The active-site Proton acceptor is the Lys207. NADPH is bound at residue Arg271. NADPH is bound at residue Glu297.

This sequence belongs to the NAD-dependent glycerol-3-phosphate dehydrogenase family.

It localises to the cytoplasm. It carries out the reaction sn-glycerol 3-phosphate + NAD(+) = dihydroxyacetone phosphate + NADH + H(+). The catalysed reaction is sn-glycerol 3-phosphate + NADP(+) = dihydroxyacetone phosphate + NADPH + H(+). The protein operates within membrane lipid metabolism; glycerophospholipid metabolism. Catalyzes the reduction of the glycolytic intermediate dihydroxyacetone phosphate (DHAP) to sn-glycerol 3-phosphate (G3P), the key precursor for phospholipid synthesis. The protein is Glycerol-3-phosphate dehydrogenase [NAD(P)+] of Acinetobacter baylyi (strain ATCC 33305 / BD413 / ADP1).